We begin with the raw amino-acid sequence, 230 residues long: DNA repair protein rdl1 (230 aa).

As to quaternary structure, interacts with rlp1 and sws1.

Its subcellular location is the cytoplasm. The protein localises to the nucleus. Its function is as follows. Involved in homologous recombination where it functions at an early stage of recombination in a pre-recombinogenic complex with rlp1 and sws1. Also has a role at a later stage of recombination in association with the rhp55-rhp57 complex. The sequence is that of DNA repair protein rdl1 (rdl1) from Schizosaccharomyces pombe (strain 972 / ATCC 24843) (Fission yeast).